Here is a 294-residue protein sequence, read N- to C-terminus: Cytidine deaminase (294 aa).

CMP/dCMP-type deaminase domains follow at residues D48–K168 and L186–G294. Residue N89–E91 coordinates substrate. H102 is a binding site for Zn(2+). E104 (proton donor) is an active-site residue. Zn(2+) contacts are provided by C129 and C132.

It belongs to the cytidine and deoxycytidylate deaminase family. In terms of assembly, homodimer. Zn(2+) serves as cofactor.

The enzyme catalyses cytidine + H2O + H(+) = uridine + NH4(+). It catalyses the reaction 2'-deoxycytidine + H2O + H(+) = 2'-deoxyuridine + NH4(+). Its function is as follows. This enzyme scavenges exogenous and endogenous cytidine and 2'-deoxycytidine for UMP synthesis. The protein is Cytidine deaminase of Salmonella typhi.